The sequence spans 2258 residues: MFPALPCPWVLVVLGTSWAAWGNLGTEAARVRQFYVAAQSISWNYHPEPTHPSSSPFATSFKKIVYREYEAYFQKEKPPSRMSGLLGPTLYADVGDIMKVHFRNKADKPLSIHPQGIKYSKFAEGASYPDHTFLVEKMDDAVAPGQEYTYEWNISEDSGPTHNDPPCLTHIYYSYENLIQDFNSGLIGPLLICKKGTLTEDGIQKMFDKQYVLMFAVFDESKSWNQSSSLMYTVNGYVNGTMPDITVCAYDHISWHLIGMSSGPELFSIHFSGQVLEQNHHKVSAITLVSATSTTANMTVSPEGKWPISSLIPKHFQAGMQAYIDIKNCAKKTRKPKKLTRDQRRHIKRWEYFIAAEEVIWDYAPIIPANMDKKYRSLHLDNFSNQIGKHYKKVVYKQYQDESFTKRLENPNNKEDGILGPVIRAQVRDTLKIVFKNMASRSYSIYPHGVTFSPYEDDVNSSSTSDNNTMIRAVQPGETYTYKWNILESDEPTENDAQCLTRPYYSNVDITRDIASGLIGLLLICKSRSLDKRGIQRTADIEQKAVFAVFDENKSWYIEDNIYKFCENPEKVKRDDPKFYESNIMSTINGYVPESIPTLGFCFDDTVQWHFCSVRTHDNILTIHFTGHSFIYGKRHEDTLTLFPMRGESVTVTMDNVGTWMLTTMNSNPRNKKLQLKFRDVKCIRDDDEDSYEIIYEPSSSTTLTTRKMHDSSENKEEENDDEYDYQDLLASVLGIRSFRNSSLYQEDDEFNLTALALENNSEFIPPSTDRAVDSNSSSPGNISRAPANTFTEPRKILPHPEATKAGSPRRHTGLVKNLVLNRRRTQHSDPYSEDPIENPLQSVITGISLLPFGTEGFRNREHPKHKRFKAGRDQAAKHRFSQMEFPAHKTGRHISQDNSSSSSMGPLEDLSSDLLLLERKDPSTINGKWHLVSEKGSYEIVQDADEDMAVNKLPNNPQNASRSWGENIPFTNKHGKQRGHPIFVTRHKLLQERQDEGNSILKKGRFFIRTRRKKKERKPVHHVPLSPRSFNPLRGEANTPFSDRRQNHSLLLHESNETFPPTDLNQTFPSMNLSLIASHPDHNQNLPNDTHQTSSPLDLYQTVTPDEPYQTAPIQDLDPTHSTAVPSHQSSLPEPIQMHDYDLRNKASPTDVSEMFFSLKLKAGHRTTSPDLNQTSLSPELSQTTLSPDPGHVTLSPDLSQTTLSPDLSHTTLSPDLGHTTLSPDLSHTTLSPDLSQTTLSPDLSHTTLSPDLGHTTLSPDLSHTTLSPDLGHATLSPDLSHTTLSPDLGHTTLSPDLGHTTLSPDFSQTTLSPDLGHTTLSSDVSHTTLSPDLSHTTLSPDLSHTTLSPDLGHTTLSPDLSQTTLSPDLGHMTLSPDLSHTTLSPDLGHTTLSPDLSHTTLSPDLGHMTLSPDLGQTTLSLDFGQTTLSPDLSHMTLSSELSHETLSPDLSQVTLSPDLSEIPFSPDLWQTTLSSDLNETTLSPDLRQTSPHPDPDKTSYISESSQSVTLPEFGQTSPFPDLGQRPSPPSHSTLNNTFIPREFNPMVVVGLSRDDGDYVEIIPRQQEENSEEDYVKIDYVEYDDPYQTDVRTDINSSRNPDNIAAWYLRSNNGNRRNYYIAAEELSWDYSKFTQREDIDDVPEHTIYKKVVFRKYLDSTFTKLDPRGEYEEHLGILGPIIRAEVDDVIQVRFKNLASRPYSLHAHGLSYEKSSEGKTYEDDSPEWFKEDNAVQPNSSYTYVWHATERSGPESPGSACRAWAYYSAVNPEKDIHSGLIGPLLICRKGTLHKENNMPVDMREFVLLFMVFDEKKSWYYEKKFTRSWRLTSSEVKNSHKFHAINGMIYNLPGLRMYEQEWVRLHLLNLGGSRDIHVVHFHGQTLLENGTQQHQLGVWPLLPGSFKTLEMKTSKAGWWLLDTEVGENQRAGMQTPFLIIDRECKMPMGLSTGLIADSQIKASEFWGHWQPKLARLNNGGSYNAWITDKFSGESNSKPWIQVDMQREVVFTGIQTQGAKYYLKSYYTTEFNVAYSSDQRNWRIFKGNSTKNVMYFNGNSDASTITENQFDPPVVARYIRISPTESYNKPALRLELQGCEVNGCSTPLGMESGNIKNEQITASSFKKSWWGDYWEPFRARLNAQGRVNAWQAKANNNNQWLQIDLLKIKKITAITTQGCKSLSSEMYVKRYTIQYSDRGVEWKSYREKSSMVDKIFEGNNNIKGHVKNFFNPPIISRFIRIIPKMWNQSIALRLELFGCDIY.

Positions 1–22 (MFPALPCPWVLVVLGTSWAAWG) are cleaved as a signal peptide. 4 consecutive Plastocyanin-like domains span residues 30–193 (RVRQ…LLIC), 203–329 (IQKM…IKNC), 348–525 (KRWE…LLIC), and 535–683 (IQRT…DVKC). F5/8 type A domains are found at residues 30–329 (RVRQ…IKNC) and 348–683 (KRWE…DVKC). Asp139 and Asp140 together coordinate Ca(2+). N-linked (GlcNAc...) asparagine glycosylation is present at Asn153. An intrachain disulfide couples Cys167 to Cys193. Asn225, Asn239, Asn297, Asn382, Asn460, and Asn467 each carry an N-linked (GlcNAc...) asparagine glycan. Residues Cys248 and Cys329 are joined by a disulfide bond. A disulfide bridge links Cys499 with Cys525. N-linked (GlcNAc...) asparagine glycosylation occurs at Asn553. A disulfide bridge links Cys602 with Cys683. Thr639 bears the Phosphothreonine mark. Residues 691–1611 (SYEIIYEPSS…PDNIAAWYLR (921 aa)) form a b region. Sulfotyrosine is present on residues Tyr692 and Tyr696. The segment at 703 to 723 (TLTTRKMHDSSENKEEENDDE) is disordered. 2 positions are modified to sulfotyrosine: Tyr724 and Tyr726. The propeptide at 738–1611 (SFRNSSLYQE…PDNIAAWYLR (874 aa)) is activation peptide (connecting region). Asn741 carries N-linked (GlcNAc...) asparagine glycosylation. Tyr745 is modified (sulfotyrosine). 6 N-linked (GlcNAc...) asparagine glycosylation sites follow: Asn752, Asn760, Asn776, Asn782, Asn899, and Asn960. The segment at 764 to 790 (FIPPSTDRAVDSNSSSPGNISRAPANT) is disordered. A compositionally biased stretch (polar residues) spans 774 to 790 (DSNSSSPGNISRAPANT). A compositionally biased stretch (basic residues) spans 1013–1022 (RKKKERKPVH). A disordered region spans residues 1013 to 1035 (RKKKERKPVHHVPLSPRSFNPLR). Residues Asn1048, Asn1057, Asn1066, Asn1073, Asn1089, and Asn1174 are each glycosylated (N-linked (GlcNAc...) asparagine). 3 stretches are compositionally biased toward polar residues: residues 1167 to 1188 (RTTS…TTLS), 1198 to 1240 (PDLS…SQTT), and 1252 to 1269 (PDLG…TTLS). Disordered stretches follow at residues 1167-1240 (RTTS…SQTT) and 1252-1334 (PDLG…LSPD). Tandem repeats lie at residues 1168–1176 (TTSPDLNQT), 1177–1185 (SLSPELSQT), 1186–1194 (TLSPDPGHV), 1195–1203 (TLSPDLSQT), 1204–1212 (TLSPDLSHT), 1213–1221 (TLSPDLGHT), 1222–1230 (TLSPDLSHT), 1231–1239 (TLSPDLSQT), 1240–1248 (TLSPDLSHT), 1249–1257 (TLSPDLGHT), 1258–1266 (TLSPDLSHT), 1267–1275 (TLSPDLGHA), 1276–1284 (TLSPDLSHT), 1285–1293 (TLSPDLGHT), 1294–1302 (TLSPDLGHT), 1303–1311 (TLSPDFSQT), 1312–1320 (TLSPDLGHT), 1321–1329 (TLSSDVSHT), 1330–1338 (TLSPDLSHT), 1339–1347 (TLSPDLSHT), 1348–1356 (TLSPDLGHT), 1357–1365 (TLSPDLSQT), 1366–1374 (TLSPDLGHM), 1375–1383 (TLSPDLSHT), 1384–1392 (TLSPDLGHT), 1393–1401 (TLSPDLSHT), 1402–1410 (TLSPDLGHM), 1411–1419 (TLSPDLGQT), 1420–1428 (TLSLDFGQT), 1429–1437 (TLSPDLSHM), 1438–1446 (TLSSELSHE), 1447–1455 (TLSPDLSQV), 1456–1464 (TLSPDLSEI), 1465–1473 (PFSPDLWQT), 1474–1482 (TLSSDLNET), 1483–1491 (TLSPDLRQT), 1492–1500 (SPHPDPDKT), 1501–1509 (SYISESSQS), 1510–1518 (VTLPEFGQT), 1519–1527 (SPFPDLGQR), and 1531–1539 (PSHSTLNNT). A 41 X 9 AA approximate tandem repeats of T-L-S-P-D-L-[GS]-[HQ]-T region spans residues 1168 to 1539 (TTSPDLNQTS…PPSHSTLNNT (372 aa)). Residues 1302-1334 (TTLSPDFSQTTLSPDLGHTTLSSDVSHTTLSPD) are compositionally biased toward polar residues. N-linked (GlcNAc...) asparagine glycosylation is present at Asn1480. Polar residues-rich tracts occupy residues 1482 to 1493 (TTLSPDLRQTSP) and 1501 to 1520 (SYIS…QTSP). The interval 1482 to 1539 (TTLSPDLRQTSPHPDPDKTSYISESSQSVTLPEFGQTSPFPDLGQRPSPPSHSTLNNT) is disordered. Residue Asn1537 is glycosylated (N-linked (GlcNAc...) asparagine). 5 positions are modified to sulfotyrosine: Tyr1560, Tyr1576, Tyr1581, Tyr1584, and Tyr1588. An N-linked (GlcNAc...) asparagine glycan is attached at Asn1597. Plastocyanin-like domains lie at 1616-1785 (NRRN…LLIC) and 1795-1941 (NMPV…DREC). An F5/8 type A 3 domain is found at 1616–1941 (NRRNYYIAAE…TPFLIIDREC (326 aa)). Tyr1631 is modified (sulfotyrosine). Asn1737 carries N-linked (GlcNAc...) asparagine glycosylation. An intrachain disulfide couples Cys1759 to Cys1785. Cu cation is bound by residues His1877 and His1879. Residue Asn1886 is glycosylated (N-linked (GlcNAc...) asparagine). Asp1919 contacts Cu cation. 2 cysteine pairs are disulfide-bonded: Cys1941/Cys2095 and Cys2100/Cys2255. F5/8 type C domains lie at 1941 to 2095 (CKMP…LQGC) and 2100 to 2255 (CSTP…LFGC). Residues Asn2044 and Asn2243 are each glycosylated (N-linked (GlcNAc...) asparagine).

It belongs to the multicopper oxidase family. As to quaternary structure, factor Va, the activated form of factor V, is composed of a heavy chain and a light chain, non-covalently bound. The interaction between the two chains is calcium-dependent. Forms heterodimer with SERPINA5. Thrombin activates factor V proteolytically to the active cofactor, factor Va (formation of a heavy chain at the N-terminus and a light chain at the C-terminus).

It is found in the secreted. Inhibited by SERPINA5. In terms of biological role, coagulation factor V is a cofactor that participates with factor Xa to activate prothrombin to thrombin. This is Coagulation factor V (F5) from Sus scrofa (Pig).